A 46-amino-acid polypeptide reads, in one-letter code: Esculentin-1 (46 aa).

Cysteine 40 and cysteine 46 are disulfide-bonded.

Belongs to the frog skin active peptide (FSAP) family. Brevinin subfamily. In terms of tissue distribution, expressed by the skin glands.

It localises to the secreted. In terms of biological role, shows antibacterial activity against representative Gram-negative and Gram-positive bacterial species, and hemolytic activity. The sequence is that of Esculentin-1 from Pelophylax lessonae (Pool frog).